We begin with the raw amino-acid sequence, 214 residues long: Methyltransferase HEMK2 (214 aa).

The S-adenosyl-L-methionine site is built by threonine 29, glutamate 51, glycine 53, aspartate 77, aspartate 103, leucine 104, and asparagine 122. Residue asparagine 122 coordinates a protein.

It belongs to the eukaryotic/archaeal PrmC-related family. In terms of assembly, heterodimer; heterodimerization with TRMT112 is required for S-adenosyl-L-methionine-binding. Post-translationally, ubiquitinated, leading to its degradation by the proteasome. Highly expressed in undifferentiated embryonic stem cells (at protein level). Also expressed in testis and brain, weakly expressed in differentiated embryonic stem cells and kidney. Not expressed in muscle, heart, placenta, pancreas, lung and stomach.

It localises to the nucleus. The enzyme catalyses L-lysyl-[histone] + S-adenosyl-L-methionine = N(6)-methyl-L-lysyl-[histone] + S-adenosyl-L-homocysteine + H(+). The catalysed reaction is L-glutaminyl-[protein] + S-adenosyl-L-methionine = N(5)-methyl-L-glutaminyl-[protein] + S-adenosyl-L-homocysteine + H(+). It carries out the reaction methylarsonous acid + S-adenosyl-L-methionine = dimethylarsinate + S-adenosyl-L-homocysteine + 2 H(+). Functionally, methyltransferase that can methylate proteins and, to a lower extent, arsenic. Catalytic subunit of a heterodimer with TRMT112, which monomethylates 'Lys-12' of histone H4 (H4K12me1), a modification present at the promoters of numerous genes encoding cell cycle regulators. Catalytic subunit of a heterodimer with TRMT112, which catalyzes N5-methylation of Glu residue of proteins with a Gly-Gln-Xaa-Xaa-Xaa-Arg motif. Methylates ETF1 on 'Gln-185'; ETF1 needs to be complexed to ERF3 in its GTP-bound form to be efficiently methylated. May also play a role in the modulation of arsenic-induced toxicity by mediating the conversion of monomethylarsonous acid (3+) into the less toxic dimethylarsonic acid. It however only plays a limited role in arsenic metabolism compared with AS3MT. The chain is Methyltransferase HEMK2 from Mus musculus (Mouse).